We begin with the raw amino-acid sequence, 419 residues long: L-rhamnose isomerase (419 aa).

Mn(2+)-binding residues include His-262, Asp-294, and Asp-296.

Belongs to the rhamnose isomerase family. Homotetramer. Requires Mn(2+) as cofactor.

It localises to the cytoplasm. The catalysed reaction is L-rhamnopyranose = L-rhamnulose. It participates in carbohydrate degradation; L-rhamnose degradation; glycerone phosphate from L-rhamnose: step 1/3. In terms of biological role, catalyzes the interconversion of L-rhamnose and L-rhamnulose. This is L-rhamnose isomerase from Salmonella gallinarum (strain 287/91 / NCTC 13346).